Consider the following 149-residue polypeptide: Large ribosomal subunit protein uL11 (149 aa).

Belongs to the universal ribosomal protein uL11 family. Part of the ribosomal stalk of the 50S ribosomal subunit. Interacts with L10 and the large rRNA to form the base of the stalk. L10 forms an elongated spine to which L12 dimers bind in a sequential fashion forming a multimeric L10(L12)X complex. In terms of processing, one or more lysine residues are methylated.

Its function is as follows. Forms part of the ribosomal stalk which helps the ribosome interact with GTP-bound translation factors. This chain is Large ribosomal subunit protein uL11, found in Azorhizobium caulinodans (strain ATCC 43989 / DSM 5975 / JCM 20966 / LMG 6465 / NBRC 14845 / NCIMB 13405 / ORS 571).